The sequence spans 483 residues: Betaine aldehyde dehydrogenase (483 aa).

The K(+) site is built by I27 and D93. NAD(+) is bound at residue 149-151; that stretch reads GAW. K161 (charge relay system) is an active-site residue. 175-178 contributes to the NAD(+) binding site; sequence KPSE. V179 contacts K(+). An NAD(+)-binding site is contributed by 228 to 231; the sequence is SVPT. V243 serves as a coordination point for K(+). E249 acts as the Proton acceptor in catalysis. Residues G251, C283, and E380 each contribute to the NAD(+) site. C283 functions as the Nucleophile in the catalytic mechanism. Cysteine sulfenic acid (-SOH) is present on C283. Residues K450 and G453 each contribute to the K(+) site. The active-site Charge relay system is E457.

Belongs to the aldehyde dehydrogenase family. Dimer of dimers. The cofactor is K(+).

It carries out the reaction betaine aldehyde + NAD(+) + H2O = glycine betaine + NADH + 2 H(+). The protein operates within amine and polyamine biosynthesis; betaine biosynthesis via choline pathway; betaine from betaine aldehyde: step 1/1. Its function is as follows. Involved in the biosynthesis of the osmoprotectant glycine betaine. Catalyzes the irreversible oxidation of betaine aldehyde to the corresponding acid. The sequence is that of Betaine aldehyde dehydrogenase from Cereibacter sphaeroides (strain KD131 / KCTC 12085) (Rhodobacter sphaeroides).